A 532-amino-acid chain; its full sequence is Spore germination protein 270-11 (532 aa).

Disordered stretches follow at residues 113-225 (TTTS…GYGS) and 328-436 (LSPT…TTGT). Over residues 329 to 426 (SPTCSDSSSP…GSGSSSETQP (98 aa)) the composition is skewed to low complexity. A run of 13 repeats spans residues 339–342 (TPTP), 343–346 (TETP), 347–350 (TETP), 351–354 (TETP), 355–358 (TETP), 359–362 (TETP), 363–366 (TETP), 367–370 (TETP), 371–374 (TETE), 375–378 (TPTP), 397–400 (TPTP), 401–404 (TETD), and 405–408 (TPTP). Residues 339–378 (TPTPTETPTETPTETPTETPTETPTETPTETPTETETPTP) are 10 X 4 AA tandem repeats of T-[EP]-T-[EP]. Positions 397-408 (TPTPTETDTPTP) are 3 X 4 AA tandem repeats of T-[EP]-T-[PD].

The polypeptide is Spore germination protein 270-11 (celB) (Dictyostelium discoideum (Social amoeba)).